A 70-amino-acid chain; its full sequence is Small ribosomal subunit protein bS21 (70 aa).

This sequence belongs to the bacterial ribosomal protein bS21 family.

The chain is Small ribosomal subunit protein bS21 from Paracidovorax citrulli (strain AAC00-1) (Acidovorax citrulli).